The following is a 234-amino-acid chain: uncharacterized protein (234 aa).

Helical transmembrane passes span 25 to 45 (LMGAGVLVSALVSWIMITFFL), 57 to 77 (LFFLVLWIIPLVMVVSLQGLA), 85 to 105 (LPIFIGYAAFMGFLISFTLLM), 108 to 128 (ATDITLAFVTAAAMFFGLSVY), 142 to 162 (AFGVAVWGLIIAMFLNFFFAS), 163 to 183 (TGLTILISLVGVVIFAGLIAW), and 203 to 223 (WAISMALSLYLDFINMFLFLL).

The protein belongs to the BI1 family.

It localises to the cell membrane. This is an uncharacterized protein from Lactococcus lactis subsp. lactis (strain IL1403) (Streptococcus lactis).